A 277-amino-acid chain; its full sequence is Undecaprenyl-diphosphatase (277 aa).

7 helical membrane-spanning segments follow: residues M1 to I21, G41 to W61, W90 to I110, F114 to A134, A191 to L211, E224 to M244, and F255 to I275.

This sequence belongs to the UppP family.

It is found in the cell membrane. The catalysed reaction is di-trans,octa-cis-undecaprenyl diphosphate + H2O = di-trans,octa-cis-undecaprenyl phosphate + phosphate + H(+). Its function is as follows. Catalyzes the dephosphorylation of undecaprenyl diphosphate (UPP). Confers resistance to bacitracin. The sequence is that of Undecaprenyl-diphosphatase from Micrococcus luteus (strain ATCC 4698 / DSM 20030 / JCM 1464 / CCM 169 / CCUG 5858 / IAM 1056 / NBRC 3333 / NCIMB 9278 / NCTC 2665 / VKM Ac-2230) (Micrococcus lysodeikticus).